A 486-amino-acid chain; its full sequence is N-succinylglutamate 5-semialdehyde dehydrogenase (486 aa).

Position 220-225 (220-225) interacts with NAD(+); that stretch reads GSSRTG. Active-site residues include glutamate 243 and cysteine 277.

The protein belongs to the aldehyde dehydrogenase family. AstD subfamily.

It carries out the reaction N-succinyl-L-glutamate 5-semialdehyde + NAD(+) + H2O = N-succinyl-L-glutamate + NADH + 2 H(+). The protein operates within amino-acid degradation; L-arginine degradation via AST pathway; L-glutamate and succinate from L-arginine: step 4/5. Functionally, catalyzes the NAD-dependent reduction of succinylglutamate semialdehyde into succinylglutamate. The polypeptide is N-succinylglutamate 5-semialdehyde dehydrogenase (Shewanella piezotolerans (strain WP3 / JCM 13877)).